Reading from the N-terminus, the 283-residue chain is Pantothenate synthetase (283 aa).

30 to 37 (MGNLHLGH) is an ATP binding site. The active-site Proton donor is the H37. Q61 lines the (R)-pantoate pocket. Q61 lines the beta-alanine pocket. 149 to 152 (GQKD) is an ATP binding site. Q155 is a binding site for (R)-pantoate. ATP contacts are provided by residues I178 and 186-189 (MSSR).

The protein belongs to the pantothenate synthetase family. In terms of assembly, homodimer.

The protein resides in the cytoplasm. It carries out the reaction (R)-pantoate + beta-alanine + ATP = (R)-pantothenate + AMP + diphosphate + H(+). The protein operates within cofactor biosynthesis; (R)-pantothenate biosynthesis; (R)-pantothenate from (R)-pantoate and beta-alanine: step 1/1. Its function is as follows. Catalyzes the condensation of pantoate with beta-alanine in an ATP-dependent reaction via a pantoyl-adenylate intermediate. The protein is Pantothenate synthetase of Shewanella halifaxensis (strain HAW-EB4).